The sequence spans 224 residues: MPQEEEAEYLFKIVIIGDSAVGKSNLLNRFTRNEFTEKTKATIGVDFGTKSIEIDNKTITAQCWDTAGQERFRAVTSGYYRGAVGAMIVYDITSKISFKNVTRWLNELREMAEQDILIMMVGNKSDLEMSREVPTKEAQAFAESNKISFLETSALNSTNVNQSFERLLTDIYHLVSSKKPMVVDDTQNWLVPNQGKKLTPLSDPAPQLTANTTSTHQEKKSGCC.

17–24 (GDSAVGKS) is a binding site for GTP. The Effector region motif lies at 39–47 (TKATIGVDF). GTP is bound by residues 65 to 69 (DTAGQ) and 123 to 126 (NKSD). The tract at residues 194 to 224 (QGKKLTPLSDPAPQLTANTTSTHQEKKSGCC) is disordered. S-geranylgeranyl cysteine attachment occurs at residues Cys-223 and Cys-224.

Belongs to the small GTPase superfamily. Rab family.

It localises to the membrane. The polypeptide is Ras-related protein Rab-11C (rab11C) (Dictyostelium discoideum (Social amoeba)).